The chain runs to 96 residues: Small ribosomal subunit protein bS16m (96 aa).

The protein belongs to the bacterial ribosomal protein bS16 family. As to quaternary structure, component of the mitochondrial small ribosomal subunit (mt-SSU). Mature yeast 74S mitochondrial ribosomes consist of a small (37S) and a large (54S) subunit. The 37S small subunit contains a 15S ribosomal RNA (15S mt-rRNA) and at least 32 different proteins. The 54S large subunit contains a 21S rRNA (21S mt-rRNA) and at least 45 different proteins.

Its subcellular location is the mitochondrion. In terms of biological role, component of the mitochondrial ribosome (mitoribosome), a dedicated translation machinery responsible for the synthesis of mitochondrial genome-encoded proteins, including at least some of the essential transmembrane subunits of the mitochondrial respiratory chain. The mitoribosomes are attached to the mitochondrial inner membrane and translation products are cotranslationally integrated into the membrane. The protein is Small ribosomal subunit protein bS16m (mrps16) of Schizosaccharomyces pombe (strain 972 / ATCC 24843) (Fission yeast).